The sequence spans 121 residues: Small ribosomal subunit protein uS13 (121 aa).

The tract at residues 90–121 (RHRRGLPTRGQNTKNNARTRKGPTKTVAGKKK) is disordered. A compositionally biased stretch (basic residues) spans 106–121 (ARTRKGPTKTVAGKKK).

This sequence belongs to the universal ribosomal protein uS13 family. As to quaternary structure, part of the 30S ribosomal subunit. Forms a loose heterodimer with protein S19. Forms two bridges to the 50S subunit in the 70S ribosome.

Located at the top of the head of the 30S subunit, it contacts several helices of the 16S rRNA. In the 70S ribosome it contacts the 23S rRNA (bridge B1a) and protein L5 of the 50S subunit (bridge B1b), connecting the 2 subunits; these bridges are implicated in subunit movement. Contacts the tRNAs in the A and P-sites. The protein is Small ribosomal subunit protein uS13 of Enterococcus faecalis (strain ATCC 700802 / V583).